A 553-amino-acid chain; its full sequence is Sulfatase (553 aa).

Residues 1 to 25 form the signal peptide; it reads MTSEMKKFSKIVLFGLLISPLLASS. Asp-43, Asp-44, and Cys-88 together coordinate Ca(2+). Cys-88 serves as the catalytic Nucleophile. 3-oxoalanine (Cys) is present on Cys-88. His-159 is a catalytic residue. Residues Asp-350 and Asn-351 each contribute to the Ca(2+) site.

It belongs to the sulfatase family. Requires Ca(2+) as cofactor. Post-translationally, the conversion to 3-oxoalanine (also known as C-formylglycine, FGly), of a serine or cysteine residue in prokaryotes and of a cysteine residue in eukaryotes, is critical for catalytic activity. This post-translational modification is severely defective in multiple sulfatase deficiency (MSD).

Its subcellular location is the secreted. Sulfatase that may be involved in ulvan degradation. Ulvan is the main polysaccharide component of the Ulvales (green seaweed) cell wall. It is composed of disaccharide building blocks comprising 3-sulfated rhamnose (Rha3S) linked to D-glucuronic acid (GlcA), L-iduronic acid (IduA), or D-xylose (Xyl). The protein is Sulfatase of Formosa agariphila (strain DSM 15362 / KCTC 12365 / LMG 23005 / KMM 3901 / M-2Alg 35-1).